The primary structure comprises 839 residues: uncharacterized protein (839 aa).

This is an uncharacterized protein from Mycoplasma pneumoniae (strain ATCC 29342 / M129 / Subtype 1) (Mycoplasmoides pneumoniae).